The chain runs to 251 residues: MKKTGYFLLAVIVIVAAAGVGYWKFSGNPDALREIVLEQCLPDQLQHQNPAPCAEVKPRAGYVVFKDRHGPLQYLLMPTYRINGTESPLLLEPATPNFFWLAWQARGYMSKKYGHDIPDSAVSLAINSRLGRSQDHLHIHISCIRPDVREQLDNDLTRISTRWLPLPGGLMGHEYLARRVTESELAQRSPFMMLAEEVPEARDHMGRYALAVVRQSDDSFVLLATERNLLTLNRASAEEIQDHSCAILSSR.

Residues 5–25 (GYFLLAVIVIVAAAGVGYWKF) traverse the membrane as a helical segment.

The protein belongs to the Cdh family.

It is found in the cell inner membrane. It carries out the reaction a CDP-1,2-diacyl-sn-glycerol + H2O = a 1,2-diacyl-sn-glycero-3-phosphate + CMP + 2 H(+). It functions in the pathway phospholipid metabolism; CDP-diacylglycerol degradation; phosphatidate from CDP-diacylglycerol: step 1/1. The polypeptide is CDP-diacylglycerol pyrophosphatase (Salmonella enteritidis PT4 (strain P125109)).